A 241-amino-acid chain; its full sequence is Probable porphobilinogen deaminase (241 aa).

It belongs to the HMBS family.

It catalyses the reaction 4 porphobilinogen + H2O = hydroxymethylbilane + 4 NH4(+). It functions in the pathway porphyrin-containing compound metabolism; protoporphyrin-IX biosynthesis; coproporphyrinogen-III from 5-aminolevulinate: step 2/4. Its function is as follows. Tetrapolymerization of the monopyrrole PBG into the hydroxymethylbilane pre-uroporphyrinogen in several discrete steps. In Chlamydia trachomatis serovar D (strain ATCC VR-885 / DSM 19411 / UW-3/Cx), this protein is Probable porphobilinogen deaminase (hemC).